Reading from the N-terminus, the 144-residue chain is Augurin-B (144 aa).

The N-terminal stretch at 1–18 is a signal peptide; sequence MSLHSLCVPTILLISVLS. The propeptide occupies 19–68; that stretch reads ICLSSGGSSDSKLHRILIKRDAKEIESRPKAYISVQQSKAKEFLSGLHRT. The disordered stretch occupies residues 109 to 144; it reads RSNDQGRQHHHDENAPMSQQDPRYNRHGANVNYDYY. Residues 112–122 show a composition bias toward basic and acidic residues; that stretch reads DQGRQHHHDEN.

The protein belongs to the augurin family.

The protein resides in the secreted. It is found in the cytoplasm. Its subcellular location is the apical cell membrane. Functionally, probable hormone. Required for the proper formation of the central nervous system by attenuating cell proliferation during development. The polypeptide is Augurin-B (Danio rerio (Zebrafish)).